Here is a 172-residue protein sequence, read N- to C-terminus: Single-stranded DNA-binding protein A (172 aa).

Residues 1–104 (MLNRVVLVGR…VQAESVQFLE (104 aa)) form the SSB domain. Tyrosine 82 is modified (phosphotyrosine). The interval 103–172 (LEPKNGGGSG…IDISDDDLPF (70 aa)) is disordered. Positions 107–131 (NGGGSGSGGYNEGNSGGGQYFGGGQ) are enriched in gly residues. Positions 132-149 (NDNPFGGNQNNQRRNQGN) are enriched in low complexity. Residues 167–172 (DDDLPF) carry the Important for interaction with partner proteins motif.

As to quaternary structure, homotetramer. Interacts with proteins involved in DNA metabolism such as PriA, RecQ, RecG, RecS, DnaE, RarA, RecJ, RecO, SbcC, RecD2 (formerly YrrC), XseA and Ung. Interacts with RecQ via its 10 C-terminal residues. Interacts with RecD2. In terms of processing, phosphorylated by YwqD, which increases ssDNA affinity; dephosphorylated by YwqE.

It is found in the cytoplasm. It localises to the nucleoid. Plays an important role in DNA replication, recombination and repair. Binds to single-stranded (ss)DNA and to an array of partner proteins to recruit them to their sites of action during DNA metabolism. Associates with oriC, this requires DnaA. SsbA binding to ssDNA prevents DnaB and DnaD individually from binding to DNA. Has a 20-fold higher affinity for ssDNA than SsbB; SsbA and DprA activate the homologous DNA strand exchange function of RecA-ATP. Enhances the activity of 3'-5' DNA helicase RecQ. This chain is Single-stranded DNA-binding protein A (ssbA), found in Bacillus subtilis (strain 168).